Here is a 548-residue protein sequence, read N- to C-terminus: Chaperonin GroEL (548 aa).

Residues 30 to 33, lysine 51, 87 to 91, glycine 415, and aspartate 496 each bind ATP; these read TLGP and DGTTT. The interval 527-548 is disordered; sequence SDKEDAMPPMRGGMGGMGGMDF. Positions 538-548 are enriched in gly residues; sequence GGMGGMGGMDF.

This sequence belongs to the chaperonin (HSP60) family. As to quaternary structure, forms a cylinder of 14 subunits composed of two heptameric rings stacked back-to-back. Interacts with the co-chaperonin GroES.

Its subcellular location is the cytoplasm. It carries out the reaction ATP + H2O + a folded polypeptide = ADP + phosphate + an unfolded polypeptide.. Functionally, together with its co-chaperonin GroES, plays an essential role in assisting protein folding. The GroEL-GroES system forms a nano-cage that allows encapsulation of the non-native substrate proteins and provides a physical environment optimized to promote and accelerate protein folding. The polypeptide is Chaperonin GroEL (Rickettsia akari (strain Hartford)).